Here is a 193-residue protein sequence, read N- to C-terminus: Flagellin B3 (193 aa).

The propeptide occupies 1-12 (MFEFITDEDERG).

This sequence belongs to the archaeal flagellin family. In terms of processing, glycosylated.

It is found in the archaeal flagellum. Its function is as follows. Flagellin is the subunit protein which polymerizes to form the filaments of archaeal flagella. The protein is Flagellin B3 (flaB3) of Halobacterium salinarum (strain ATCC 700922 / JCM 11081 / NRC-1) (Halobacterium halobium).